Here is a 465-residue protein sequence, read N- to C-terminus: Glutamate--tRNA ligase 1 (465 aa).

The short motif at 8 to 18 is the 'HIGH' region element; it reads PSPTGNLHIGG. Positions 236 to 240 match the 'KMSKS' region motif; the sequence is KLSKR. Lys239 lines the ATP pocket.

The protein belongs to the class-I aminoacyl-tRNA synthetase family. Glutamate--tRNA ligase type 1 subfamily. In terms of assembly, monomer.

Its subcellular location is the cytoplasm. It carries out the reaction tRNA(Glu) + L-glutamate + ATP = L-glutamyl-tRNA(Glu) + AMP + diphosphate. Functionally, catalyzes the attachment of glutamate to tRNA(Glu) in a two-step reaction: glutamate is first activated by ATP to form Glu-AMP and then transferred to the acceptor end of tRNA(Glu). The sequence is that of Glutamate--tRNA ligase 1 from Wolinella succinogenes (strain ATCC 29543 / DSM 1740 / CCUG 13145 / JCM 31913 / LMG 7466 / NCTC 11488 / FDC 602W) (Vibrio succinogenes).